A 215-amino-acid chain; its full sequence is Small ribosomal subunit protein uS7 (215 aa).

This sequence belongs to the universal ribosomal protein uS7 family. Part of the 30S ribosomal subunit.

Its function is as follows. One of the primary rRNA binding proteins, it binds directly to 16S rRNA where it nucleates assembly of the head domain of the 30S subunit. Is located at the subunit interface close to the decoding center. The chain is Small ribosomal subunit protein uS7 from Pyrococcus abyssi (strain GE5 / Orsay).